Here is a 485-residue protein sequence, read N- to C-terminus: Protein disulfide isomerase-like 5-4 (485 aa).

Positions 114-263 constitute a Thioredoxin domain; sequence VPTGSEFHPG…LVAAMETYVA (150 aa). Cys170 (nucleophile) is an active-site residue. A helical membrane pass occupies residues 444–464; sequence FSHFITNVCAIIGGVFTVAGI.

It belongs to the protein disulfide isomerase family.

It is found in the membrane. In terms of biological role, acts as a protein-folding catalyst that interacts with nascent polypeptides to catalyze the formation, isomerization, and reduction or oxidation of disulfide bonds. May play a role in storage protein biogenesis. This is Protein disulfide isomerase-like 5-4 (PDIL5-4) from Oryza sativa subsp. japonica (Rice).